The following is a 432-amino-acid chain: Trigger factor (432 aa).

The PPIase FKBP-type domain occupies 161-246 (DDRVTIDFVG…LKKIENMVLP (86 aa)).

The protein belongs to the FKBP-type PPIase family. Tig subfamily.

The protein resides in the cytoplasm. It carries out the reaction [protein]-peptidylproline (omega=180) = [protein]-peptidylproline (omega=0). In terms of biological role, involved in protein export. Acts as a chaperone by maintaining the newly synthesized protein in an open conformation. Functions as a peptidyl-prolyl cis-trans isomerase. In Haemophilus influenzae (strain ATCC 51907 / DSM 11121 / KW20 / Rd), this protein is Trigger factor (tig).